Reading from the N-terminus, the 487-residue chain is ATP synthase subunit beta 1 (487 aa).

162 to 169 lines the ATP pocket; sequence GGAGVGKT.

The protein belongs to the ATPase alpha/beta chains family. As to quaternary structure, F-type ATPases have 2 components, CF(1) - the catalytic core - and CF(0) - the membrane proton channel. CF(1) has five subunits: alpha(3), beta(3), gamma(1), delta(1), epsilon(1). CF(0) has three main subunits: a(1), b(2) and c(9-12). The alpha and beta chains form an alternating ring which encloses part of the gamma chain. CF(1) is attached to CF(0) by a central stalk formed by the gamma and epsilon chains, while a peripheral stalk is formed by the delta and b chains.

Its subcellular location is the cell inner membrane. The enzyme catalyses ATP + H2O + 4 H(+)(in) = ADP + phosphate + 5 H(+)(out). Produces ATP from ADP in the presence of a proton gradient across the membrane. The catalytic sites are hosted primarily by the beta subunits. This chain is ATP synthase subunit beta 1, found in Gluconobacter oxydans (strain 621H) (Gluconobacter suboxydans).